The following is a 95-amino-acid chain: Aspartyl/glutamyl-tRNA(Asn/Gln) amidotransferase subunit C (95 aa).

Belongs to the GatC family. As to quaternary structure, heterotrimer of A, B and C subunits.

The enzyme catalyses L-glutamyl-tRNA(Gln) + L-glutamine + ATP + H2O = L-glutaminyl-tRNA(Gln) + L-glutamate + ADP + phosphate + H(+). It carries out the reaction L-aspartyl-tRNA(Asn) + L-glutamine + ATP + H2O = L-asparaginyl-tRNA(Asn) + L-glutamate + ADP + phosphate + 2 H(+). Allows the formation of correctly charged Asn-tRNA(Asn) or Gln-tRNA(Gln) through the transamidation of misacylated Asp-tRNA(Asn) or Glu-tRNA(Gln) in organisms which lack either or both of asparaginyl-tRNA or glutaminyl-tRNA synthetases. The reaction takes place in the presence of glutamine and ATP through an activated phospho-Asp-tRNA(Asn) or phospho-Glu-tRNA(Gln). The sequence is that of Aspartyl/glutamyl-tRNA(Asn/Gln) amidotransferase subunit C from Chlorobaculum tepidum (strain ATCC 49652 / DSM 12025 / NBRC 103806 / TLS) (Chlorobium tepidum).